Here is a 497-residue protein sequence, read N- to C-terminus: Actin-binding protein WASF2 (497 aa).

2 disordered regions span residues 173 to 203 (KEKR…KEEW) and 239 to 436 (ENVD…SDAR). Positions 252–263 (SDSASSPSPSFS) are enriched in low complexity. Pro residues-rich tracts occupy residues 298–335 (SHPP…PPLP) and 343–403 (GTPP…PPLP). In terms of domain architecture, WH2 spans 435-452 (ARSDLLSAIRQGFQLRRV). Phosphoserine is present on Ser-473.

It belongs to the SCAR/WAVE family. In terms of assembly, binds actin and the Arp2/3 complex. Interacts with BAIAP2. Component of the WAVE2 complex composed of ABI1, CYFIP1/SRA1, NCKAP1/NAP1 (NCKAP1l/HEM1 in hematopoietic cells) and WASF2/WAVE2. Directly interacts with BRK1. Interacts with human cytomegalovirus protein UL135. Interacts with FNBP1L (via the SH3 domain).

It is found in the cytoplasm. The protein resides in the cytoskeleton. The protein localises to the cell projection. Its subcellular location is the lamellipodium. It localises to the basolateral cell membrane. Functionally, downstream effector molecule involved in the transmission of signals from tyrosine kinase receptors and small GTPases to the actin cytoskeleton. Promotes formation of actin filaments. Part of the WAVE complex that regulates lamellipodia formation. The WAVE complex regulates actin filament reorganization via its interaction with the Arp2/3 complex. The polypeptide is Actin-binding protein WASF2 (Mus musculus (Mouse)).